Consider the following 194-residue polypeptide: Mitochondrial import inner membrane translocase subunit Tim22 (194 aa).

2 disulfide bridges follow: cysteine 69-cysteine 141 and cysteine 160-cysteine 179. 3 helical membrane-spanning segments follow: residues 74–94 (VLACVGGFVLGGAFGIFTAGI), 123–143 (MSYAKNFAIVGAMFSCTECLV), and 170–190 (AGVKAGAIGCGGFAAFSAAID).

The protein belongs to the Tim17/Tim22/Tim23 family. As to quaternary structure, component of the TIM22 complex, whose core is composed of TIMM22, associated with peripheral protein FXC1/TIMM10B and the 70 kDa heterohexamer. In most cases, the 70 kDa complex is composed of TIMM9 and TIMM10 (TIMM10A or TIMM10B). A small fraction of the 70 kDa complex is composed of TIMM8 (TIMM8A/DDP1 or TIMM8B/DDP2) and TIMM13. The TIM22 complex also contains AGK and TIMM29. Interacts directly with TIMM9, TIMM10A and FXC1/TIMM10B. Interacts (when oxidized) with TIMM29; interaction is direct. In terms of processing, disulfide bonds promote efficient assembly of the TIM22 complex.

Its subcellular location is the mitochondrion inner membrane. In terms of biological role, essential core component of the TIM22 complex, a complex that mediates the import and insertion of multi-pass transmembrane proteins into the mitochondrial inner membrane. In the TIM22 complex, it constitutes the voltage-activated and signal-gated channel. Forms a twin-pore translocase that uses the membrane potential as external driving force in 2 voltage-dependent steps. In Mus musculus (Mouse), this protein is Mitochondrial import inner membrane translocase subunit Tim22 (Timm22).